A 51-amino-acid polypeptide reads, in one-letter code: Putative protein LomR (51 aa).

It belongs to the outer membrane OOP (TC 1.B.6) superfamily. Ail family.

In Escherichia coli (strain K12), this protein is Putative protein LomR (lomR).